Here is a 241-residue protein sequence, read N- to C-terminus: 1-(5-phosphoribosyl)-5-[(5-phosphoribosylamino)methylideneamino] imidazole-4-carboxamide isomerase (241 aa).

Aspartate 8 functions as the Proton acceptor in the catalytic mechanism. Aspartate 129 functions as the Proton donor in the catalytic mechanism.

This sequence belongs to the HisA/HisF family.

It is found in the cytoplasm. It catalyses the reaction 1-(5-phospho-beta-D-ribosyl)-5-[(5-phospho-beta-D-ribosylamino)methylideneamino]imidazole-4-carboxamide = 5-[(5-phospho-1-deoxy-D-ribulos-1-ylimino)methylamino]-1-(5-phospho-beta-D-ribosyl)imidazole-4-carboxamide. The protein operates within amino-acid biosynthesis; L-histidine biosynthesis; L-histidine from 5-phospho-alpha-D-ribose 1-diphosphate: step 4/9. This chain is 1-(5-phosphoribosyl)-5-[(5-phosphoribosylamino)methylideneamino] imidazole-4-carboxamide isomerase, found in Rhodospirillum rubrum (strain ATCC 11170 / ATH 1.1.1 / DSM 467 / LMG 4362 / NCIMB 8255 / S1).